We begin with the raw amino-acid sequence, 2493 residues long: Polyprotein P1234 (2493 aa).

The 232-residue stretch at 28–259 (EAKQVTDNDH…EKRDLLRSWH (232 aa)) folds into the Alphavirus-like MT domain. The interval 244–263 (GSTIYHEKRDLLRSWHLPSV) is nsP1 membrane-binding. A lipid anchor (S-palmitoyl cysteine; by host) is attached at Cys419. In terms of domain architecture, (+)RNA virus helicase ATP-binding spans 690–841 (ELVDPPFHEF…HEICTQVFHK (152 aa)). 721–728 (GVPGSGKS) serves as a coordination point for a ribonucleoside 5'-triphosphate. A (+)RNA virus helicase C-terminal domain is found at 842–990 (SISRRCTKSV…IEEWQAEHDA (149 aa)). The Peptidase C9 domain occupies 1003–1322 (DVFQNKANVC…STLTNIYTGS (320 aa)). A nucleolus localization signal region spans residues 1004 to 1023 (VFQNKANVCWAKALVPVLKT). The active-site For cysteine protease nsP2 activity is Cys1012. Positions 1056 to 1065 (VRFFGLDLDS) match the Nuclear export signal motif. His1081 serves as the catalytic For cysteine protease nsP2 activity. A Nuclear localization signal motif is present at residues 1179 to 1183 (PGKKV). Residues 1330-1489 (APSYHVVRGD…TLKEAVARRE (160 aa)) enclose the Macro domain. ADP-D-ribose contacts are provided by Asp1339, Asn1353, Gly1361, Gly1441, Ile1442, and Phe1443. Residues Cys1596, Cys1598, Cys1621, and Cys1639 each contribute to the Zn(2+) site. Disordered stretches follow at residues 1664 to 1684 (PVEETPESPAENQSTEGTPEQ) and 1790 to 1826 (APRTVFRNPPHPAPRTRTPPLAHSRASSRTSLVSTPP). Positions 1814 to 1823 (RASSRTSLVS) are enriched in polar residues. 2 consecutive repeat copies span residues 1818–1839 (RTSLVSTPPGVNRVITREELEA) and 1852–1873 (RTSLVSNPPGVNRVITREEFEA). A 2 X 21 AA approximate repeats, binding to host FXR family members region spans residues 1818–1873 (RTSLVSTPPGVNRVITREELEALTPSRAPSRSASRTSLVSNPPGVNRVITREEFEA). The RdRp catalytic domain maps to 2250–2365 (DCVLETDIAS…KGVKSDKLMA (116 aa)).

In terms of assembly, interacts with non-structural protein 3. Interacts with RNA-directed RNA polymerase nsP4. Interacts with protease nsP2. interacts with itself. Interacts with mRNA-capping enzyme nsP1. Interacts with host DDX1. Interacts with host DDX3. Interacts (via C-terminus) with host FXR1; this interaction inhibits the formation of host stress granules on viral mRNAs and the nsp3-FXR1 complexes bind viral RNAs and probably orchestrate the assembly of viral replication complexes. Interacts (via C-terminus) with host FXR2; this interaction inhibits the formation of host stress granules on viral mRNAs and the nsp3-FXR2 complexes bind viral RNAs and probably orchestrate the assembly of viral replication complexes. Interacts (via C-terminus) with host FMR1; this interaction inhibits the formation of host stress granules on viral mRNAs and the nsp3-FMR1 complexes bind viral RNAs and probably orchestrate the assembly of viral replication complexes. As to quaternary structure, interacts with mRNA-capping enzyme nsP1. Interacts with protease nsP2. interacts with itself. In terms of assembly, interacts with RNA-directed RNA polymerase nsP4. Interacts with mRNA-capping enzyme nsP1. Interacts with KPNA1/karyopherin-alpha1; this interaction probably allows the active transport of protease nsP2 into the host nucleus. It depends on Mg(2+) as a cofactor. Requires Mn(2+) as cofactor. Post-translationally, specific enzymatic cleavages in vivo yield mature proteins. The processing of the polyprotein is temporally regulated. In early stages (1.7 hpi), P1234 is first cleaved in trans through its nsP2 protease activity, releasing P123' and nsP4, which associate to form the early replication complex. At the same time, P1234 is also cut at the nsP1/nsP2 site early in infection but with lower efficiency. After replication of the viral minus-strand RNAs (4 hpi), the polyproteins are cut at the nsP1/nsP2 and nsP2/nsP3 sites very efficiently, preventing accumulation of P123' and P1234 and allowing the formation of the late replication complex. NsP3'/nsP4 site is not cleaved anymore and P34 is produced rather than nsP4. Specific enzymatic cleavages in vivo yield mature proteins. The processing of the polyprotein is temporally regulated. In early stages (1.7 hpi), P123 is cleaved at the nsP1/nsP2 site with low efficiency. After replication of the viral minus-strand RNAs (4 hpi), the polyproteins are cut at the nsP1/nsP2 and nsP2/nsP3 sites very efficiently, preventing accumulation of P123 and allowing the formation of the late replication complex. In terms of processing, specific enzymatic cleavages in vivo yield mature proteins. The processing of the polyprotein is temporally regulated. In early stages (1.7 hpi), P123' is cleaved at the nsP1/nsP2 site with low efficiency. After replication of the viral minus-strand RNAs (4 hpi), the polyproteins are cut at the nsP1/nsP2 and nsP2/nsP3 sites very efficiently, preventing accumulation of P123' and allowing the formation of the late replication complex. Post-translationally, palmitoylated by host palmitoyltransferases ZDHHC2 and ZDHHC19. Phosphorylated by host on serines and threonines. In terms of processing, ubiquitinated; targets the protein for rapid degradation via the ubiquitin system. Nsp4 is present in extremely low quantities due to low frequency of translation through the amber stop-codon and the degradation by the ubiquitin pathway.

The protein resides in the host cytoplasmic vesicle membrane. It is found in the host cell membrane. Its subcellular location is the host cell projection. It localises to the host filopodium. The protein localises to the host nucleus. The protein resides in the host cytoplasm. The enzyme catalyses GTP + S-adenosyl-L-methionine = N(7)-methyl-GTP + S-adenosyl-L-homocysteine. It carries out the reaction N(7)-methyl-GTP + L-histidyl-[protein] = N(tele)-(N(7)-methylguanosine 5'-phospho)-L-histidyl-[protein] + diphosphate. The catalysed reaction is N(tele)-(N(7)-methylguanosine 5'-phospho)-L-histidyl-[protein] + a 5'-end diphospho-(purine-ribonucleoside) in mRNA + H(+) = a 5'-end (N(7)-methyl 5'-triphosphoguanosine)-(purine-ribonucleoside) in mRNA + L-histidyl-[protein]. It catalyses the reaction a 5'-end triphospho-ribonucleoside in mRNA + H2O = a 5'-end diphospho-ribonucleoside in mRNA + phosphate + H(+). The enzyme catalyses a ribonucleoside 5'-triphosphate + H2O = a ribonucleoside 5'-diphosphate + phosphate + H(+). It carries out the reaction ATP + H2O = ADP + phosphate + H(+). The catalysed reaction is RNA(n) + a ribonucleoside 5'-triphosphate = RNA(n+1) + diphosphate. It catalyses the reaction 4-O-(ADP-D-ribosyl)-L-aspartyl-[protein] + H2O = L-aspartyl-[protein] + ADP-D-ribose + H(+). The enzyme catalyses 5-O-(ADP-D-ribosyl)-L-glutamyl-[protein] + H2O = L-glutamyl-[protein] + ADP-D-ribose + H(+). It carries out the reaction RNA(n) + ATP = RNA(n)-3'-adenine ribonucleotide + diphosphate. The catalysed reaction is ADP-alpha-D-ribose 1''-phosphate + H2O = ADP-D-ribose + phosphate. Inhibited by sinefungin. Inactive precursor of the viral replicase, which is activated by cleavages carried out by the viral protease nsP2. In terms of biological role, the early replication complex formed by the polyprotein P123 and nsP4 synthesizes the minus-strand RNAs (antigenome). Polyprotein P123 is a short-lived polyprotein that accumulates during early stage of infection. As soon P123 is cleaved into mature proteins, the plus-strand RNAs synthesis begins. Its function is as follows. The early replication complex formed by the polyprotein P123' and nsP4 synthesizes minus-strand RNAs (antigenome). Polyprotein P123' is a short-lived polyprotein that accumulates during early stage of infection. As soon P123' is cleaved into mature proteins, the plus-strand RNAs synthesis begins. Functionally, cytoplasmic capping enzyme that catalyzes two virus-specific reactions: methyltransferase and nsP1 guanylyltransferase. mRNA-capping is necessary since all viral RNAs are synthesized in the cytoplasm, and host capping enzymes are restricted to the nucleus. The enzymatic reaction involves a covalent link between 7-methyl-GMP and nsP1, whereas eukaryotic capping enzymes form a covalent complex only with GMP. NsP1 capping consists in the following reactions: GTP is first methylated into 7-methyl-GMP and then is covalently linked to nsP1 to form the m7GMp-nsP1 complex from which 7-methyl-GMP complex is transferred to the mRNA to create the cap structure. NsP1 is also needed for the initiation of the minus-strand RNAs synthesis. Probably serves as a membrane anchor for the replication complex composed of nsP1-nsP4. Nsp1 is needed for the initiation of the minus-strand RNAs synthesis. Palmitoylated nsP1 is remodeling host cell cytoskeleton, and induces filopodium-like structure formation at the surface of the host cell. Multifunctional protein whose N-terminus is part of the RNA polymerase complex and displays NTPase, RNA triphosphatase and helicase activities. NTPase and RNA triphosphatase are involved in viral RNA capping and helicase keeps a check on the dsRNA replication intermediates. The C-terminus harbors a protease that specifically cleaves the polyproteins and releases the mature proteins. Required for the shutoff of minus-strand RNAs synthesis. Inhibits host translation to ensure maximal viral gene expression and evade host immune response. In terms of biological role, seems to be essential for minus-strand RNAs and subgenomic 26S mRNAs synthesis. Displays mono-ADP-ribosylhydrolase activity. ADP-ribosylation is a post-translational modification that controls various processes of the host cell and the virus probably needs to revert it for optimal viral replication. Binds proteins of FXR family and sequesters them into the viral RNA replication complexes thereby inhibiting the formation of host stress granules on viral mRNAs. The nsp3-FXR complexes bind viral RNAs and probably orchestrate the assembly of viral replication complexes, thanks to the ability of FXR family members to self-assemble and bind DNA. Its function is as follows. Seems to be essential for minus-strand RNAs and subgenomic 26S mRNAs synthesis. Displays mono-ADP-ribosylhydrolase activity. ADP-ribosylation is a post-translational modification that controls various processes of the host cell and the virus probably needs to revert it for optimal viral replication. Binds proteins of FXR family and sequesters them into the viral RNA replication complexes thereby inhibiting the formation of host stress granules on viral mRNAs. The nsp3'-FXR complexes bind viral RNAs and probably orchestrate the assembly of viral replication complexes, thanks to the ability of FXR family members to self-assemble and bind DNA. Functionally, RNA dependent RNA polymerase. Replicates genomic and antigenomic RNA by recognizing replications specific signals. The early replication complex formed by the polyprotein P123 and nsP4 synthesizes minus-strand RNAs. The late replication complex composed of fully processed nsP1-nsP4 is responsible for the production of genomic and subgenomic plus-strand RNAs. This chain is Polyprotein P1234, found in Bos taurus (Bovine).